Consider the following 159-residue polypeptide: Ascorbate-specific PTS system EIIA component (159 aa).

The PTS EIIA type-2 domain maps to 9–152; sequence VLKQHHTVRL…TSLFAVIDRV (144 aa). Residue H71 is the Tele-phosphohistidine intermediate of the active site. At H71 the chain carries Phosphohistidine.

The protein resides in the cytoplasm. Functionally, the phosphoenolpyruvate-dependent sugar phosphotransferase system (sugar PTS), a major carbohydrate active transport system, catalyzes the phosphorylation of incoming sugar substrates concomitantly with their translocation across the cell membrane. The enzyme II UlaABC PTS system is involved in ascorbate transport. This is Ascorbate-specific PTS system EIIA component (ulaC) from Mycoplasma pneumoniae (strain ATCC 29342 / M129 / Subtype 1) (Mycoplasmoides pneumoniae).